Here is a 153-residue protein sequence, read N- to C-terminus: 6,7-dimethyl-8-ribityllumazine synthase (153 aa).

Residues phenylalanine 22, 56 to 58, and 80 to 82 each bind 5-amino-6-(D-ribitylamino)uracil; these read AFE and AVI. 85 to 86 contributes to the (2S)-2-hydroxy-3-oxobutyl phosphate binding site; that stretch reads ST. Histidine 88 acts as the Proton donor in catalysis. Phenylalanine 113 serves as a coordination point for 5-amino-6-(D-ribitylamino)uracil. Residue arginine 127 coordinates (2S)-2-hydroxy-3-oxobutyl phosphate.

It belongs to the DMRL synthase family.

The catalysed reaction is (2S)-2-hydroxy-3-oxobutyl phosphate + 5-amino-6-(D-ribitylamino)uracil = 6,7-dimethyl-8-(1-D-ribityl)lumazine + phosphate + 2 H2O + H(+). It participates in cofactor biosynthesis; riboflavin biosynthesis; riboflavin from 2-hydroxy-3-oxobutyl phosphate and 5-amino-6-(D-ribitylamino)uracil: step 1/2. Functionally, catalyzes the formation of 6,7-dimethyl-8-ribityllumazine by condensation of 5-amino-6-(D-ribitylamino)uracil with 3,4-dihydroxy-2-butanone 4-phosphate. This is the penultimate step in the biosynthesis of riboflavin. This chain is 6,7-dimethyl-8-ribityllumazine synthase, found in Clostridium botulinum (strain Eklund 17B / Type B).